We begin with the raw amino-acid sequence, 229 residues long: MFNNSFWIFFAIIHFIIVLLFYKGFGKMGLFVWIGFATVCANLQVVKTVELFGLTATLGNVMYGTIFFATDVLNEKYGPAEARKAVWLGFSTLLTLTFVMQGVLLFEPASSDISQTALETIFGFLPRVALGSLLAFIFSQTLDVYVYSAIRRIFPSDRLLWLRNGGSTAVSQLFDTFIFTAVAFLGIYPADVWLHIFISTYLIKFAVSLISLPYAYAAKKMIPNDERSS.

The next 7 helical transmembrane spans lie at 6 to 26, 28 to 48, 49 to 69, 86 to 106, 118 to 138, 160 to 182, and 192 to 214; these read FWIF…KGFG, MGLF…VVKT, VELF…IFFA, VWLG…VLLF, LETI…AFIF, LWLR…FTAV, and VWLH…SLPY.

This sequence belongs to the vitamin uptake transporter (VUT/ECF) (TC 2.A.88) family. Q precursor transporter subfamily.

The protein localises to the cell membrane. In terms of biological role, involved in the import of queuosine (Q) precursors, required for Q precursor salvage. The sequence is that of Probable queuosine precursor transporter (ypdP) from Bacillus subtilis (strain 168).